The following is a 190-amino-acid chain: Protein PLANT CADMIUM RESISTANCE 10 (190 aa).

2 consecutive transmembrane segments (helical) span residues Leu78 to Val98 and Gly108 to Tyr125.

Belongs to the cornifelin family.

The protein localises to the membrane. May be involved in cadmium resistance. The sequence is that of Protein PLANT CADMIUM RESISTANCE 10 (PCR10) from Arabidopsis thaliana (Mouse-ear cress).